We begin with the raw amino-acid sequence, 248 residues long: Probable S-methyl-5'-thioinosine phosphorylase (248 aa).

Residues T12 and 54–55 (RH) contribute to the phosphate site. M187 serves as a coordination point for substrate. T188 provides a ligand contact to phosphate. Position 211–213 (211–213 (NWA)) interacts with substrate.

It belongs to the PNP/MTAP phosphorylase family. MTAP subfamily. As to quaternary structure, homotrimer.

It carries out the reaction S-methyl-5'-thioinosine + phosphate = 5-(methylsulfanyl)-alpha-D-ribose 1-phosphate + hypoxanthine. It participates in purine metabolism; purine nucleoside salvage. In terms of biological role, catalyzes the reversible phosphorylation of S-methyl-5'-thioinosine (MTI) to hypoxanthine and 5-methylthioribose-1-phosphate. Involved in the breakdown of S-methyl-5'-thioadenosine (MTA), a major by-product of polyamine biosynthesis. Catabolism of (MTA) occurs via deamination to MTI and phosphorolysis to hypoxanthine. The protein is Probable S-methyl-5'-thioinosine phosphorylase of Xylella fastidiosa (strain Temecula1 / ATCC 700964).